Consider the following 309-residue polypeptide: Ribonuclease Z (309 aa).

Positions 63, 65, 67, 68, 141, 212, and 270 each coordinate Zn(2+). The active-site Proton acceptor is D67.

This sequence belongs to the RNase Z family. In terms of assembly, homodimer. Requires Zn(2+) as cofactor.

The enzyme catalyses Endonucleolytic cleavage of RNA, removing extra 3' nucleotides from tRNA precursor, generating 3' termini of tRNAs. A 3'-hydroxy group is left at the tRNA terminus and a 5'-phosphoryl group is left at the trailer molecule.. Functionally, zinc phosphodiesterase, which displays some tRNA 3'-processing endonuclease activity. Probably involved in tRNA maturation, by removing a 3'-trailer from precursor tRNA. The protein is Ribonuclease Z of Limosilactobacillus reuteri (strain DSM 20016) (Lactobacillus reuteri).